Consider the following 311-residue polypeptide: 4-diphosphocytidyl-2-C-methyl-D-erythritol kinase (311 aa).

Residue K9 is part of the active site. Residue 95 to 105 (PLGAGLAGGST) participates in ATP binding. D137 is a catalytic residue.

Belongs to the GHMP kinase family. IspE subfamily.

The enzyme catalyses 4-CDP-2-C-methyl-D-erythritol + ATP = 4-CDP-2-C-methyl-D-erythritol 2-phosphate + ADP + H(+). It participates in isoprenoid biosynthesis; isopentenyl diphosphate biosynthesis via DXP pathway; isopentenyl diphosphate from 1-deoxy-D-xylulose 5-phosphate: step 3/6. Its function is as follows. Catalyzes the phosphorylation of the position 2 hydroxy group of 4-diphosphocytidyl-2C-methyl-D-erythritol. The protein is 4-diphosphocytidyl-2-C-methyl-D-erythritol kinase of Thermosynechococcus vestitus (strain NIES-2133 / IAM M-273 / BP-1).